Here is a 224-residue protein sequence, read N- to C-terminus: Response regulator protein GraR (224 aa).

The Response regulatory domain occupies 2 to 115 (QILLVEDDNT…VLIAKLQAIY (114 aa)). 4-aspartylphosphate is present on aspartate 51. The ompR/PhoB-type DNA-binding region spans 126 to 224 (KRTLTWQDAV…KVGKGYMAHE (99 aa)). Threonine 128, threonine 130, and threonine 149 each carry phosphothreonine.

As to quaternary structure, interacts with GraX. In terms of processing, phosphorylated by GraS. Phosphorylated by Stk1; phosphorylation increases the DNA-binding activity of GraR.

The protein localises to the cytoplasm. In terms of biological role, member of the two-component regulatory system GraR/GraS involved in resistance against cationic antimicrobial peptides (CAMPs). Upon phosphorylation by GraS, functions as a transcription regulator by direct binding to promoter regions of target genes such as adhesins, exoproteins, transporters, toxins, and proteins involved in cell wall synthesis. Down-regulates the expression of many genes involved in RNA and amino acid synthesis or glycolysis. This chain is Response regulator protein GraR (graR), found in Staphylococcus aureus (strain Mu3 / ATCC 700698).